A 76-amino-acid polypeptide reads, in one-letter code: Sec-independent protein translocase protein TatA (76 aa).

A helical membrane pass occupies residues 1 to 21; the sequence is MGSFSIWHWLVVLAIVVLVFG. The tract at residues 41–76 is disordered; sequence EGMKGAEEESTPPPPAQQVTGHSIKSEIEEKDQTKV. Residues 64 to 76 are compositionally biased toward basic and acidic residues; it reads IKSEIEEKDQTKV.

The protein belongs to the TatA/E family. As to quaternary structure, the Tat system comprises two distinct complexes: a TatABC complex, containing multiple copies of TatA, TatB and TatC subunits, and a separate TatA complex, containing only TatA subunits. Substrates initially bind to the TatABC complex, which probably triggers association of the separate TatA complex to form the active translocon.

It is found in the cell inner membrane. Its function is as follows. Part of the twin-arginine translocation (Tat) system that transports large folded proteins containing a characteristic twin-arginine motif in their signal peptide across membranes. TatA could form the protein-conducting channel of the Tat system. This is Sec-independent protein translocase protein TatA from Nitrosomonas europaea (strain ATCC 19718 / CIP 103999 / KCTC 2705 / NBRC 14298).